The chain runs to 152 residues: MRSNPMTLRLNDLKPADGARTQRTRVGRGIGSGLGKTAGRGHKGSFARKGGGKIKAGFEGGQTPMQRRLPKIGFRSKMARDTAEVLSYQLDKLDAGDVDFVALRAANLVPSRAKKAKIVLKGELSKKFVLKGVAATAGAKAAIEAAGGSVEE.

Residues 1-66 (MRSNPMTLRL…GFEGGQTPMQ (66 aa)) are disordered. The segment covering 28–38 (RGIGSGLGKTA) has biased composition (gly residues). A compositionally biased stretch (basic residues) spans 39 to 52 (GRGHKGSFARKGGG).

It belongs to the universal ribosomal protein uL15 family. In terms of assembly, part of the 50S ribosomal subunit.

In terms of biological role, binds to the 23S rRNA. This Xanthomonas oryzae pv. oryzae (strain KACC10331 / KXO85) protein is Large ribosomal subunit protein uL15.